The sequence spans 318 residues: Mitochondrial thiamine pyrophosphate carrier (318 aa).

Solcar repeat units lie at residues 13–106, 116–202, and 214–309; these read NSKL…LTEL, HQFS…LKRA, and TGNL…FCNL. Transmembrane regions (helical) follow at residues 19–39, 87–107, 122–142, 173–193, and 220–240; these read AVAGSVSGFVTRALISPLDVI, ILSIGYGAVQFLAFEELTELL, FVCGGLSAGTATLTVHPVDVL, VFYKGLTPTVIAIFPYAGLQF, and LLCGCGSGVISKTFTYPLDLI. A Substrate recognition motif is present at residues 241–246; it reads KKRLQV. The chain crosses the membrane as a helical span at residues 293 to 313; the sequence is ALSTGFMFFWYELFCNLFHCI.

Belongs to the mitochondrial carrier (TC 2.A.29) family.

The protein localises to the mitochondrion membrane. It catalyses the reaction thiamine phosphate(out) + thiamine diphosphate(in) = thiamine phosphate(in) + thiamine diphosphate(out). Mitochondrial transporter mediating uptake of thiamine diphosphate into mitochondria. It is not clear if the antiporter activity is affected by the membrane potential or by the proton electrochemical gradient. The protein is Mitochondrial thiamine pyrophosphate carrier (Slc25a19) of Mus musculus (Mouse).